The sequence spans 361 residues: UDP-N-acetylglucosamine--N-acetylmuramyl-(pentapeptide) pyrophosphoryl-undecaprenol N-acetylglucosamine transferase (361 aa).

UDP-N-acetyl-alpha-D-glucosamine is bound by residues 11–13 (TGG), N124, R162, S193, and Q292.

The protein belongs to the glycosyltransferase 28 family. MurG subfamily.

Its subcellular location is the cell inner membrane. The enzyme catalyses di-trans,octa-cis-undecaprenyl diphospho-N-acetyl-alpha-D-muramoyl-L-alanyl-D-glutamyl-meso-2,6-diaminopimeloyl-D-alanyl-D-alanine + UDP-N-acetyl-alpha-D-glucosamine = di-trans,octa-cis-undecaprenyl diphospho-[N-acetyl-alpha-D-glucosaminyl-(1-&gt;4)]-N-acetyl-alpha-D-muramoyl-L-alanyl-D-glutamyl-meso-2,6-diaminopimeloyl-D-alanyl-D-alanine + UDP + H(+). Its pathway is cell wall biogenesis; peptidoglycan biosynthesis. Functionally, cell wall formation. Catalyzes the transfer of a GlcNAc subunit on undecaprenyl-pyrophosphoryl-MurNAc-pentapeptide (lipid intermediate I) to form undecaprenyl-pyrophosphoryl-MurNAc-(pentapeptide)GlcNAc (lipid intermediate II). This Elusimicrobium minutum (strain Pei191) protein is UDP-N-acetylglucosamine--N-acetylmuramyl-(pentapeptide) pyrophosphoryl-undecaprenol N-acetylglucosamine transferase.